Reading from the N-terminus, the 317-residue chain is 3-oxoacyl-[acyl-carrier-protein] reductase 5, chloroplastic (317 aa).

A chloroplast-targeting transit peptide spans 1 to 57 (TTVAATKLTSLKATAGKLGYREICQVRQWAPLKSAMPHFGMLRCATSTVVKAQAQAQ). 79–103 (VTGASRGIGKAIALSLGKAGCKVLV) contacts NADP(+). Ser211 provides a ligand contact to substrate. Catalysis depends on Tyr224, which acts as the Proton acceptor.

Belongs to the short-chain dehydrogenases/reductases (SDR) family. In terms of assembly, homotetramer.

It localises to the plastid. Its subcellular location is the chloroplast. The catalysed reaction is a (3R)-hydroxyacyl-[ACP] + NADP(+) = a 3-oxoacyl-[ACP] + NADPH + H(+). The protein operates within lipid metabolism; fatty acid biosynthesis. The polypeptide is 3-oxoacyl-[acyl-carrier-protein] reductase 5, chloroplastic (bkr1) (Brassica napus (Rape)).